The primary structure comprises 117 residues: uncharacterized protein (117 aa).

This is an uncharacterized protein from Bacillus subtilis (strain 168).